Consider the following 236-residue polypeptide: Regulatory protein cys-3 (236 aa).

Residues 26 to 89 (TLGQLQPIQP…MSVPPTPGAR (64 aa)) form a disordered region. Positions 28–37 (GQLQPIQPNP) are enriched in polar residues. Residues 99 to 162 (LAAEEDKRKR…KWLKGLVTEK (64 aa)) form the bZIP domain. The segment at 105 to 137 (KRKRNTAASARFRIKKKQREQALEKSAKEMSEK) is basic motif. A leucine-zipper region spans residues 141-155 (LEGRIQALETENKWL). Residues 189–236 (AAAADKAEAAADKADAERAREESSFCVSTSSPSSDESVDTDNKKRRKD) form a disordered region. Positions 193–211 (DKAEAAADKADAERAREES) are enriched in basic and acidic residues. Residues 212-223 (SFCVSTSSPSSD) show a composition bias toward low complexity.

The protein belongs to the bZIP family. GCN4 subfamily. In terms of assembly, binds DNA as a dimer.

The protein resides in the nucleus. Its function is as follows. Turns on the expression of structural genes which encode sulfur-catabolic enzymes. Binds to sequence elements upstream of these genes. The sequence is that of Regulatory protein cys-3 (cys-3) from Neurospora crassa (strain ATCC 24698 / 74-OR23-1A / CBS 708.71 / DSM 1257 / FGSC 987).